A 425-amino-acid polypeptide reads, in one-letter code: MLDLDLIRNDTEKVKKALLKKIDNVDFTELLKLDDERRKLIHEVEVLKNKKNEASKQISNIKSQGGKVDESFFKDIKEISNKISELETSLEPIKGKMDTFLEALPNIPDEDVLPGGKENNKVVHVYGEKPQFEFEPKDHVELSNIHDLIDYKRGTKLSGNGFWIYKGYGAILEWALLNYFIEEHIKDGYEFILPPHILNYECGRTAGQFPKFKDEVFKVGSNGEGEGMQFILPTAETALVNLHRDEILKEDELPKKYFAYTPCYRVEAGSYRASERGMIRGHQFNKIEMFQYTKPEDSDAALEELIGKAEKLVKGLGLHYRLSKLAAADCSASMAKTYDIEVWIPSMNEYKEVSSASNARDYQARRGKIRFRREETKKIEYVNTLNASGLATSRVLPAILEQMQDKDGSIVVPEVLRKWVGKDKL.

234-236 (TAE) lines the L-serine pocket. 265–267 (RVE) is an ATP binding site. E288 is an L-serine binding site. ATP is bound at residue 352–355 (EVSS). Position 388 (S388) interacts with L-serine.

Belongs to the class-II aminoacyl-tRNA synthetase family. Type-1 seryl-tRNA synthetase subfamily. As to quaternary structure, homodimer. The tRNA molecule binds across the dimer.

It is found in the cytoplasm. The enzyme catalyses tRNA(Ser) + L-serine + ATP = L-seryl-tRNA(Ser) + AMP + diphosphate + H(+). It carries out the reaction tRNA(Sec) + L-serine + ATP = L-seryl-tRNA(Sec) + AMP + diphosphate + H(+). The protein operates within aminoacyl-tRNA biosynthesis; selenocysteinyl-tRNA(Sec) biosynthesis; L-seryl-tRNA(Sec) from L-serine and tRNA(Sec): step 1/1. Catalyzes the attachment of serine to tRNA(Ser). Is also able to aminoacylate tRNA(Sec) with serine, to form the misacylated tRNA L-seryl-tRNA(Sec), which will be further converted into selenocysteinyl-tRNA(Sec). In Clostridium acetobutylicum (strain ATCC 824 / DSM 792 / JCM 1419 / IAM 19013 / LMG 5710 / NBRC 13948 / NRRL B-527 / VKM B-1787 / 2291 / W), this protein is Serine--tRNA ligase 2.